A 438-amino-acid chain; its full sequence is Myosin light chain kinase, smooth muscle (438 aa).

Residues 1 to 241 (FRLVEKKTGK…CTQCLQHPWL (241 aa)) form the Protein kinase domain. K15 is a binding site for ATP. Y97 carries the post-translational modification Phosphotyrosine; by ABL1. The active-site Proton acceptor is D107. A Phosphotyrosine; by ABL1 modification is found at Y157. A calmodulin-binding region spans residues 233–296 (TQCLQHPWLX…SGLSGRKSST (64 aa)). S281, S282, S294, S295, and S298 each carry phosphoserine. The interval 283–438 (MAMISGLSGR…GEGGEEEEEE (156 aa)) is telokin. The interval 289–309 (LSGRKSSTGSPTSPLNAEKLE) is disordered. The segment covering 292–303 (RKSSTGSPTSPL) has biased composition (polar residues). T300 is subject to Phosphothreonine. S301 carries the phosphoserine modification. The 90-residue stretch at 331–420 (PYFSKTIRDL…GEATCTAELI (90 aa)) folds into the Ig-like C2-type domain. Cysteines 352 and 404 form a disulfide.

It belongs to the protein kinase superfamily. CAMK Ser/Thr protein kinase family. All isoforms including Telokin bind calmodulin. Interacts with SVIL. Interacts with CTTN; this interaction is reduced during thrombin-induced endothelial cell (EC) contraction but is promoted by the barrier-protective agonist sphingosine 1-phosphate (S1P) within lamellipodia. A complex made of ABL1, CTTN and MYLK regulates cortical actin-based cytoskeletal rearrangement critical to sphingosine 1-phosphate (S1P)-mediated endothelial cell (EC) barrier enhancement. Binds to NAA10/ARD1 and PTK2B/PYK2. Mg(2+) serves as cofactor. Ca(2+) is required as a cofactor. Post-translationally, the C-terminus is deglutamylated by AGTPBP1/CCP1, AGBL1/CCP4 and AGBL4/CCP6, leading to the formation of Myosin light chain kinase, smooth muscle, deglutamylated form. The consequences of C-terminal deglutamylation are unknown. Can probably be down-regulated by phosphorylation. Tyrosine phosphorylation by ABL1 increases kinase activity, reverses MLCK-mediated inhibition of Arp2/3-mediated actin polymerization, and enhances CTTN-binding. Phosphorylation by SRC promotes CTTN binding.

It is found in the cytoplasm. It localises to the cell projection. Its subcellular location is the lamellipodium. The protein resides in the cleavage furrow. The protein localises to the cytoskeleton. It is found in the stress fiber. The enzyme catalyses L-seryl-[myosin light chain] + ATP = O-phospho-L-seryl-[myosin light chain] + ADP + H(+). It catalyses the reaction L-threonyl-[myosin light chain] + ATP = O-phospho-L-threonyl-[myosin light chain] + ADP + H(+). Functionally, calcium/calmodulin-dependent myosin light chain kinase implicated in smooth muscle contraction via phosphorylation of myosin light chains (MLC). Also regulates actin-myosin interaction through a non-kinase activity. Phosphorylates PTK2B/PYK2 and myosin light-chains. Involved in the inflammatory response (e.g. apoptosis, vascular permeability, leukocyte diapedesis), cell motility and morphology, airway hyperreactivity and other activities relevant to asthma. Required for tonic airway smooth muscle contraction that is necessary for physiological and asthmatic airway resistance. Necessary for gastrointestinal motility. Implicated in the regulation of endothelial as well as vascular permeability, probably via the regulation of cytoskeletal rearrangements. In the nervous system it has been shown to control the growth initiation of astrocytic processes in culture and to participate in transmitter release at synapses formed between cultured sympathetic ganglion cells. Critical participant in signaling sequences that result in fibroblast apoptosis. Plays a role in the regulation of epithelial cell survival. Required for epithelial wound healing, especially during actomyosin ring contraction during purse-string wound closure. Mediates RhoA-dependent membrane blebbing. Triggers TRPC5 channel activity in a calcium-dependent signaling, by inducing its subcellular localization at the plasma membrane. Promotes cell migration (including tumor cells) and tumor metastasis. PTK2B/PYK2 activation by phosphorylation mediates ITGB2 activation and is thus essential to trigger neutrophil transmigration during acute lung injury (ALI). May regulate optic nerve head astrocyte migration. Probably involved in mitotic cytoskeletal regulation. Regulates tight junction probably by modulating ZO-1 exchange in the perijunctional actomyosin ring. Mediates burn-induced microvascular barrier injury; triggers endothelial contraction in the development of microvascular hyperpermeability by phosphorylating MLC. Essential for intestinal barrier dysfunction. Mediates Giardia spp.-mediated reduced epithelial barrier function during giardiasis intestinal infection via reorganization of cytoskeletal F-actin and tight junctional ZO-1. Necessary for hypotonicity-induced Ca(2+) entry and subsequent activation of volume-sensitive organic osmolyte/anion channels (VSOAC) in cervical cancer cells. The polypeptide is Myosin light chain kinase, smooth muscle (MYLK) (Ovis aries (Sheep)).